A 315-amino-acid chain; its full sequence is Protein sprouty homolog 2 (315 aa).

Polar residues predominate over residues 1-15; it reads MEARAQSGNGSQPLL. A disordered region spans residues 1 to 140; it reads MEARAQSGNG…SEQRLLGSSF (140 aa). Positions 20 to 32 are enriched in basic and acidic residues; that stretch reads DGGRPRGEPDPRD. The span at 108–140 shows a compositional bias: low complexity; that stretch reads SRSISTVSSGSRSSTRTSTSSSSSEQRLLGSSF. The segment at 118–315 is required for interaction with CAV1; it reads SRSSTRTSTS…VPRRNFEKPT (198 aa). Positions 177–291 constitute an SPR domain; the sequence is RCEDCGKCKC…CYDRVNRPGC (115 aa). A required for interaction with TESK1 region spans residues 178 to 315; sequence CEDCGKCKCK…VPRRNFEKPT (138 aa).

This sequence belongs to the sprouty family. As to quaternary structure, forms heterodimers with SPRY1. Forms a tripartite complex containing GAB1, METTL13 and SPRY2. Within the complex interacts with METTL13. Interacts with RAF1. Interacts (via C-terminus) with TESK1 (via C-terminus); the interaction disrupts SPRY2 interaction with GRB2, potentially via disruption of SPRY2 serine dephosphorylation. Interacts with PPP2R1A/PP2A-A and PPP2CA/PP2A-C; the interaction with PPP2CA/PP2A-C is inhibited by interaction with TESK1, possibly by vesicular sequestration of SPRY2. Inhibition of the interaction with the serine/threonine-protein phosphatase 2A (PP2A) holoenzyme results in loss of PP2A-mediated dephosphorylation, resulting in the loss of SPRY2 interaction with GRB2. Interacts with GRB2. Interacts with CBL/C-CBL; the interaction inhibits CBL-mediated ubiquitination of EGFR. Interacts (via C-terminus) with CAV1 (via C-terminus). Post-translationally, cleaved at Pro-144 by the prolyl endopeptidase FAP (seprase) activity (in vitro).

It is found in the cytoplasm. Its subcellular location is the cytoskeleton. The protein localises to the cell projection. It localises to the ruffle membrane. Antagonist of fibroblast growth factor (FGF) pathways via inhibition of FGF-mediated phosphorylation of ERK1/2. Thereby acts as an antagonist of FGF-induced retinal lens fiber differentiation, may inhibit limb bud outgrowth and may negatively modulate respiratory organogenesis. Inhibits TGFB-induced epithelial-to-mesenchymal transition in retinal lens epithelial cells. Inhibits CBL/C-CBL-mediated EGFR ubiquitination. This Pongo abelii (Sumatran orangutan) protein is Protein sprouty homolog 2 (SPRY2).